The sequence spans 514 residues: HERV-H LTR-associating protein 1 homolog (514 aa).

The N-terminal stretch at 1-29 (MQSFLLHCPPIRLCMGLACILFLWNAVSG) is a signal peptide. N-linked (GlcNAc...) asparagine glycans are attached at residues N58, N97, N139, N161, N179, N200, N217, N232, and N321. A disordered region spans residues 379 to 420 (LHPTGILTTPSRLAQPSRASGTLMPGTQTTNPTQAPAPRVPQ). The segment covering 384–398 (ILTTPSRLAQPSRAS) has biased composition (polar residues). Over residues 403 to 415 (PGTQTTNPTQAPA) the composition is skewed to low complexity.

It localises to the secreted. The protein is HERV-H LTR-associating protein 1 homolog (Hhla1) of Mus musculus (Mouse).